The sequence spans 485 residues: uncharacterized protein (485 aa).

10 helical membrane-spanning segments follow: residues 9-29 (IFIS…LTHQ), 66-86 (PIID…ALAL), 98-118 (YITA…IENL), 131-151 (VAIS…NIII), 159-179 (FLSL…AFII), 194-214 (NTAS…YFIA), 259-279 (NYLI…VIVL), 293-313 (LLVV…MIFL), 322-342 (VLIG…YAFE), and 350-370 (IYFS…YNAI).

Its subcellular location is the host membrane. This is an uncharacterized protein from Salmonella typhimurium (Bacteriophage P22).